A 1159-amino-acid chain; its full sequence is ATP-dependent helicase/deoxyribonuclease subunit B (1159 aa).

The UvrD-like helicase ATP-binding domain occupies Met-1 to Val-401. An ATP-binding site is contributed by Gly-8 to Ser-15. The 304-residue stretch at Pro-279 to Gly-582 folds into the UvrD-like helicase C-terminal domain. Residues Cys-787, Cys-1106, Cys-1109, and Cys-1115 each contribute to the [4Fe-4S] cluster site.

This sequence belongs to the helicase family. AddB/RexB type 1 subfamily. In terms of assembly, heterodimer of AddA and AddB. The cofactor is Mg(2+). [4Fe-4S] cluster is required as a cofactor.

In terms of biological role, the heterodimer acts as both an ATP-dependent DNA helicase and an ATP-dependent, dual-direction single-stranded exonuclease. Recognizes the chi site generating a DNA molecule suitable for the initiation of homologous recombination. The AddB subunit has 5' -&gt; 3' nuclease activity but not helicase activity. This chain is ATP-dependent helicase/deoxyribonuclease subunit B, found in Clostridium beijerinckii (strain ATCC 51743 / NCIMB 8052) (Clostridium acetobutylicum).